Reading from the N-terminus, the 38-residue chain is Potassium channel toxin alpha-KTx 3.12 (38 aa).

3 disulfides stabilise this stretch: C8–C28, C14–C33, and C18–C35. K38 carries the lysine amide modification.

Belongs to the short scorpion toxin superfamily. Potassium channel inhibitor family. Alpha-KTx 03 subfamily. Expressed by the venom gland.

Its subcellular location is the secreted. Potent inhibitor of voltage-dependent potassium channels, with a preference for Kv1.3/KCNA3 versus Kv1.2/KCNA2. The protein is Potassium channel toxin alpha-KTx 3.12 of Androctonus amoreuxi (African fattail scorpion).